Here is a 143-residue protein sequence, read N- to C-terminus: Nucleoside diphosphate kinase (143 aa).

ATP contacts are provided by Lys11, Phe59, Arg87, Thr93, Arg104, and Asn114. Residue His117 is the Pros-phosphohistidine intermediate of the active site.

This sequence belongs to the NDK family. Homotetramer. It depends on Mg(2+) as a cofactor.

It localises to the cytoplasm. The catalysed reaction is a 2'-deoxyribonucleoside 5'-diphosphate + ATP = a 2'-deoxyribonucleoside 5'-triphosphate + ADP. It carries out the reaction a ribonucleoside 5'-diphosphate + ATP = a ribonucleoside 5'-triphosphate + ADP. In terms of biological role, major role in the synthesis of nucleoside triphosphates other than ATP. The ATP gamma phosphate is transferred to the NDP beta phosphate via a ping-pong mechanism, using a phosphorylated active-site intermediate. This chain is Nucleoside diphosphate kinase, found in Cronobacter sakazakii (strain ATCC BAA-894) (Enterobacter sakazakii).